The following is a 130-amino-acid chain: Small ribosomal subunit protein uS8y (130 aa).

This sequence belongs to the universal ribosomal protein uS8 family.

In Arabidopsis thaliana (Mouse-ear cress), this protein is Small ribosomal subunit protein uS8y (RPS15AC).